Consider the following 538-residue polypeptide: Putative outer membrane porin BglH (538 aa).

Positions 1-25 (MFRRNIITSAILLMAPLAFSAQSLA) are cleaved as a signal peptide.

It belongs to the porin LamB (TC 1.B.3) family.

The protein localises to the cell outer membrane. In terms of biological role, may be a sugar porin with a broad carbohydrate specificity. This chain is Putative outer membrane porin BglH (bglH), found in Escherichia coli O6:K15:H31 (strain 536 / UPEC).